A 50-amino-acid polypeptide reads, in one-letter code: Large ribosomal subunit protein eL40 (50 aa).

The protein belongs to the eukaryotic ribosomal protein eL40 family.

This Aeropyrum pernix (strain ATCC 700893 / DSM 11879 / JCM 9820 / NBRC 100138 / K1) protein is Large ribosomal subunit protein eL40.